An 828-amino-acid chain; its full sequence is Hapless 2 (828 aa).

Residues 1–32 (MKNKLINLRSKHIYKLIIIIFFCIILKYYKWC) form the signal peptide. At 33–680 (DFKNKVFFIQ…INTVKTLIGK (648 aa)) the chain is on the extracellular side. Cysteine 53 and cysteine 62 are disulfide-bonded. N-linked (GlcNAc...) asparagine glycosylation is present at asparagine 74. Cystine bridges form between cysteine 142–cysteine 209, cysteine 170–cysteine 381, cysteine 172–cysteine 191, and cysteine 363–cysteine 388. Residues 174-191 (TYNYFKDDEFIKRAKLKC) form a cd loop; involved in gamete fusion region. Residues asparagine 233, asparagine 250, asparagine 264, asparagine 293, and asparagine 333 are each glycosylated (N-linked (GlcNAc...) asparagine). N-linked (GlcNAc...) asparagine glycans are attached at residues asparagine 479, asparagine 516, asparagine 531, and asparagine 539. Cysteine 546 and cysteine 592 are oxidised to a cystine. The helical transmembrane segment at 681–701 (FAIIAILIILAPALIPLLPFF) threads the bilayer. Residues 702-828 (LNFFFLFIST…SGKSKIPPLR (127 aa)) are Cytoplasmic-facing. Residues 773-828 (RKNKKKFNKNNISSNIKHKKGGKKVKQKEPNRNSNHTSHEYADTSPSGKSKIPPLR) are disordered. The span at 788 to 798 (IKHKKGGKKVK) shows a compositional bias: basic residues. Residues 799 to 814 (QKEPNRNSNHTSHEYA) show a composition bias toward basic and acidic residues.

It belongs to the HAP2/GCS1 family.

The protein resides in the cell membrane. During fertilization, required on male gametes for their fusion with female gametes, and for subsequent ookinete formation in the host. Thereby, required for mosquito-mediated transmission to other animals. Probably initiates the fusion of gamete cell membranes by inserting part of its extracellular domain into the cell membrane of a female gamete. The protein is Hapless 2 of Plasmodium berghei (strain Anka).